Reading from the N-terminus, the 291-residue chain is Meteorin (291 aa).

Positions 1 to 21 (MLVAALLCALCCGLLAASARA) are cleaved as a signal peptide. Intrachain disulfides connect C28–C49, C80–C116, C169–C240, C172–C264, and C182–C286.

It belongs to the meteorin family. As to quaternary structure, monomer.

It is found in the secreted. In terms of biological role, involved in both glial cell differentiation and axonal network formation during neurogenesis. Promotes astrocyte differentiation and transforms cerebellar astrocytes into radial glia. Also induces axonal extension in small and intermediate neurons of sensory ganglia by activating nearby satellite glia. In Rattus norvegicus (Rat), this protein is Meteorin (Metrn).